Here is a 336-residue protein sequence, read N- to C-terminus: Protein FPV127 (336 aa).

The segment at 1 to 22 (MGGGLVLPTRDPPKEQDTSETA) is disordered.

This sequence belongs to the poxviruses A16/G9/J5 family.

This is Protein FPV127 from Vertebrata (FPV).